Here is a 143-residue protein sequence, read N- to C-terminus: Nitrosuccinic acid decarboxylase npaB (143 aa).

It belongs to the carboxymuconolactone decarboxylase family. It depends on Mg(2+) as a cofactor.

The protein operates within mycotoxin biosynthesis. In terms of biological role, nitrosuccinic acid decarboxylase; part of the gene cluster that mediates the biosynthesis of the deadly neurotoxic nitroalkane 3-nitropropanoic acid (3-NPA) that acts as an antimetabolite of succinate and irreversibly inhibits succinate dehydrogenase and disrupts mitochondrial oxidative phosphorylation. NpaB facilitates decarboxylation of nitrosuccinic acid produced by the nitrosuccinic acid synthase npaA to yield the final product of the cluster, the lethal mycotoxin 3-NPA. This Metarhizium robertsii (strain ARSEF 23 / ATCC MYA-3075) (Metarhizium anisopliae (strain ARSEF 23)) protein is Nitrosuccinic acid decarboxylase npaB.